Here is a 357-residue protein sequence, read N- to C-terminus: Cinnamyl alcohol dehydrogenase 1 (357 aa).

The region spanning 20-348 is the Enoyl reductase (ER) domain; that stretch reads GILSPYTYTL…KNDVRYRFVV (329 aa). Cys-47 provides a ligand contact to Zn(2+). Residue Ser-49 participates in NADP(+) binding. 7 residues coordinate Zn(2+): His-69, Glu-70, Cys-100, Cys-103, Cys-106, Cys-114, and Cys-163. Residues Thr-167, 188-193, 211-216, Thr-251, Gly-275, and 298-300 contribute to the NADP(+) site; these read GLGGVG, SSSDKK, and SFI.

This sequence belongs to the zinc-containing alcohol dehydrogenase family. In terms of assembly, homodimer. Zn(2+) serves as cofactor. In terms of tissue distribution, accumulates mainly in the placenta of red fruits, and, to a lower extent, in green fruits placenta, pericarp and seeds.

It localises to the cytoplasm. The catalysed reaction is (E)-cinnamyl alcohol + NADP(+) = (E)-cinnamaldehyde + NADPH + H(+). It catalyses the reaction (E)-coniferol + NADP(+) = (E)-coniferaldehyde + NADPH + H(+). The enzyme catalyses (E)-sinapyl alcohol + NADP(+) = (E)-sinapaldehyde + NADPH + H(+). It carries out the reaction (E)-4-coumaroyl alcohol + NADP(+) = (E)-4-coumaraldehyde + NADPH + H(+). The catalysed reaction is (E)-caffeyl alcohol + NADP(+) = (E)-caffeyl aldehyde + NADPH + H(+). It catalyses the reaction vanillin + NADPH + H(+) = 4-hydroxy-3-methoxy-benzenemethanol + NADP(+). Its pathway is aromatic compound metabolism; phenylpropanoid biosynthesis. With respect to regulation, inhibited, in a concentration-dependent manner, by N-(O-hydroxyphenyl) sulfinamoyltertiobutyl acetate (OHPAS), a specific cinnamyl alcohol dehydrogenase (CAD) inhibitor, as well as by ethylenediaminetetraacetic acid (EDTA), a metalloenzyme inhibitor. Involved in the biosynthesis of capsinoids natural products (e.g. capsiate), non-pungent alkaloids synthesized from phenylpropanoid intermediates in the placental tissue of sweet chili pepper fruit acting as repellant on herbivorous mammals. Catalyzes the reduction of vanillin to generate vanillyl alcohol, a precursor of capsiate, a non-pungent component that accumulates mainly in the placenta of mature red fruits, but also in green fruits to lower levels. Involved in lignin biosynthesis. Catalyzes the final step specific for the production of lignin monomers. Mediates the conversion of cinnamaldehyde and coniferaldehyde to cinnamyl alcohol and coniferyl alcohol, respectively. Catalyzes the NADPH-dependent reduction of 5-hydroxyconiferaldehyde, sinapaldehyde, 4-coumaraldehyde and caffeyl aldehyde to their respective alcohols. The polypeptide is Cinnamyl alcohol dehydrogenase 1 (Capsicum annuum (Capsicum pepper)).